Here is a 145-residue protein sequence, read N- to C-terminus: Ribonuclease VapC7 (145 aa).

A PINc domain is found at 2 to 129 (IVLDTTVLVY…PAFADLSDVV (128 aa)). Mg(2+) is bound by residues aspartate 5 and aspartate 100.

It belongs to the PINc/VapC protein family. Mg(2+) serves as cofactor.

Functionally, toxic component of a type II toxin-antitoxin (TA) system. An RNase. The cognate antitoxin is VapB7. This chain is Ribonuclease VapC7, found in Mycobacterium tuberculosis (strain ATCC 25618 / H37Rv).